The following is a 214-amino-acid chain: Thymidylate kinase (214 aa).

10–17 (GPDGAGKT) provides a ligand contact to ATP.

This sequence belongs to the thymidylate kinase family.

The enzyme catalyses dTMP + ATP = dTDP + ADP. In terms of biological role, phosphorylation of dTMP to form dTDP in both de novo and salvage pathways of dTTP synthesis. In Lacticaseibacillus casei (strain BL23) (Lactobacillus casei), this protein is Thymidylate kinase.